The sequence spans 453 residues: Bifunctional protein GlmU (453 aa).

Positions 1–226 (MKFSTVILAA…SIEVEGVNDR (226 aa)) are pyrophosphorylase. Residues 8-11 (LAAG), K22, Q73, 78-79 (GT), 100-102 (YGD), G137, E151, N166, and N224 each bind UDP-N-acetyl-alpha-D-glucosamine. Residue D102 coordinates Mg(2+). N224 contributes to the Mg(2+) binding site. Residues 227-247 (IQLARLERAFQARQAKKLLEQ) form a linker region. An N-acetyltransferase region spans residues 248 to 453 (GVMLRDPARF…AGWQRPAKKK (206 aa)). UDP-N-acetyl-alpha-D-glucosamine contacts are provided by R330 and K348. Catalysis depends on H360, which acts as the Proton acceptor. UDP-N-acetyl-alpha-D-glucosamine is bound by residues Y363 and N374. Residues A377, 383 to 384 (NY), S402, A420, and R437 contribute to the acetyl-CoA site.

In the N-terminal section; belongs to the N-acetylglucosamine-1-phosphate uridyltransferase family. This sequence in the C-terminal section; belongs to the transferase hexapeptide repeat family. As to quaternary structure, homotrimer. Mg(2+) is required as a cofactor.

The protein localises to the cytoplasm. The catalysed reaction is alpha-D-glucosamine 1-phosphate + acetyl-CoA = N-acetyl-alpha-D-glucosamine 1-phosphate + CoA + H(+). The enzyme catalyses N-acetyl-alpha-D-glucosamine 1-phosphate + UTP + H(+) = UDP-N-acetyl-alpha-D-glucosamine + diphosphate. It functions in the pathway nucleotide-sugar biosynthesis; UDP-N-acetyl-alpha-D-glucosamine biosynthesis; N-acetyl-alpha-D-glucosamine 1-phosphate from alpha-D-glucosamine 6-phosphate (route II): step 2/2. The protein operates within nucleotide-sugar biosynthesis; UDP-N-acetyl-alpha-D-glucosamine biosynthesis; UDP-N-acetyl-alpha-D-glucosamine from N-acetyl-alpha-D-glucosamine 1-phosphate: step 1/1. Its pathway is bacterial outer membrane biogenesis; LPS lipid A biosynthesis. Functionally, catalyzes the last two sequential reactions in the de novo biosynthetic pathway for UDP-N-acetylglucosamine (UDP-GlcNAc). The C-terminal domain catalyzes the transfer of acetyl group from acetyl coenzyme A to glucosamine-1-phosphate (GlcN-1-P) to produce N-acetylglucosamine-1-phosphate (GlcNAc-1-P), which is converted into UDP-GlcNAc by the transfer of uridine 5-monophosphate (from uridine 5-triphosphate), a reaction catalyzed by the N-terminal domain. In Vibrio cholerae serotype O1 (strain M66-2), this protein is Bifunctional protein GlmU.